Reading from the N-terminus, the 394-residue chain is 4-O-methyl-glucuronoyl methylesterase (394 aa).

Positions 1-18 are cleaved as a signal peptide; sequence MVHLTPALLLASAAFAAA. Disulfide bonds link C29/C63, C210/C345, and C242/C317. Residues 209-214 carry the GXSYXG catalytic site motif motif; that stretch reads GCSRNG. S211 (nucleophile) is an active-site residue. Substrate contacts are provided by K215, Q257, E265, and W308. Catalysis depends on H344, which acts as the Proton donor/acceptor.

Belongs to the carbohydrate esterase 15 (CE15) family.

Its subcellular location is the secreted. The enzyme catalyses a 4-O-methyl-alpha-D-glucuronosyl ester derivative + H2O = 4-O-methyl-alpha-D-glucuronate derivative + an alcohol + H(+). Glucuronoyl esterase which may play a significant role in biomass degradation, as it is considered to disconnect hemicellulose from lignin through the hydrolysis of the ester bond between 4-O-methyl-D-glucuronic acid residues of glucuronoxylans and aromatic alcohols of lignin. The polypeptide is 4-O-methyl-glucuronoyl methylesterase (Neurospora crassa (strain ATCC 24698 / 74-OR23-1A / CBS 708.71 / DSM 1257 / FGSC 987)).